The sequence spans 480 residues: Sporozoite surface protein P36p (480 aa).

The first 22 residues, 1–22 (MKRRSIFMYYCFCFLLKYVAFS), serve as a signal peptide directing secretion. 6-Cys domains lie at 23–156 (NVPN…FKKM) and 159–298 (KIKG…TSKN). 5 N-linked (GlcNAc...) asparagine glycosylation sites follow: N28, N40, N92, N111, and N184. 6 cysteine pairs are disulfide-bonded: C37/C49, C63/C137, C80/C135, C163/C187, C201/C280, and C221/C278. 7 N-linked (GlcNAc...) asparagine glycosylation sites follow: N294, N368, N375, N392, N405, N409, and N424. Positions 358-415 (KMDSSDDDESNETESSENESNERTHNGNRANKDANNSEKMTGNRRKKNNSINNTNYYS) are disordered. Residues 362 to 376 (SDDDESNETESSENE) are compositionally biased toward acidic residues. A compositionally biased stretch (basic and acidic residues) spans 377–393 (SNERTHNGNRANKDANN). Residues 406–415 (NSINNTNYYS) are compositionally biased toward low complexity. S457 carries the GPI-anchor amidated serine lipid modification. A propeptide spans 458-480 (SSYYEVFNYFSIAFILIIHMLLL) (removed in mature form).

The protein localises to the cell surface. It localises to the cell membrane. Its function is as follows. Involved in sporozoite infection of hepatocytes and replication therein. The protein is Sporozoite surface protein P36p (P52) of Plasmodium yoelii yoelii.